A 118-amino-acid polypeptide reads, in one-letter code: MSNVYDKAHELKKAIAESEEFSALKSMHEEIEADEIAKKMLENFRNLQLELQQKQMQGIQITEEEAQKAQQQFELVQQHELISKLMEAEQRLSVIIGDINKIITEPLEEIYGNPEGQQ.

The protein belongs to the UPF0342 family.

The sequence is that of UPF0342 protein BpOF4_11360 from Alkalihalophilus pseudofirmus (strain ATCC BAA-2126 / JCM 17055 / OF4) (Bacillus pseudofirmus).